The following is a 452-amino-acid chain: Scaffold protein ILK (452 aa).

Met1 carries the post-translational modification N-acetylmethionine. ANK repeat units lie at residues 2-30, 31-63, 64-96, 97-129, and 130-174; these read DDIF…LNQG, DDHG…INVM, NRGD…INAV, NEHG…VSIC, and NKYG…GTTR. Positions 33 to 139 are interaction with LIMS1; that stretch reads HGFSPLHWAC…NKYGEMPVDK (107 aa). Thr173 is modified (phosphothreonine). The interval 180–212 is PH-like; mediates interaction with TGFB1I1; the sequence is GTLNKHSGIDFKQLNFLAKLNENHSGELWKGRW. At Ser186 the chain carries Phosphoserine. The Protein kinase domain occupies 193 to 446; it reads LNFLAKLNEN…PKFDMIVPIL (254 aa). Asn200, Asn202, His203, and Ser204 together coordinate ATP. Ser246 is modified (phosphoserine). ATP-binding residues include His270, Met272, and Asn279. Mg(2+) is bound at residue Asp339. Position 341 (Lys341) interacts with ATP. The Nuclear localization signal motif lies at 363–371; that stretch reads KKPEDTNRR. Lys426 is subject to N6-acetyllysine.

It belongs to the protein kinase superfamily. TKL Ser/Thr protein kinase family. As to quaternary structure, component of the heterotrimeric IPP (ILK-PINCH-PARVIN) complex composed of ILK, LIMS1/PINCH and PARVA; the complex binds to F-actin via the C-terminal tail of LIMS1 and the N-terminal region of PARVA, promoting F-actin filament bundling. Formation of the IPP complex is dependent on protein kinase C and precedes integrin-mediated cell adhesion and spreading. ILK also interacts with LIMS2/PINCH2 and with PARVB and PARVG which may substitute for LIMS1 and PARVA in the IPP complex; PARVA and PARVB compete for the same binding site. Interaction with PARVG promotes the establishment of cell polarity required for leukocyte migration. Interacts with the cytoplasmic domain of integrin ITGB1 and may also interact with integrins ITGB2, ITGB3 and/or ITGB5. Interacts probably also with TGFB1I1. Interacts (via ANK repeats) with EPHA1 (via SAM domain); stimulated by EFNA1 but independent of the kinase activity of EPHA1. Interacts with FERMT2. Interacts with LIMD2; leading to activate the protein kinase activity. Interacts with PXN/PAXILLIN (via LD motif 4). Interacts with CCDC25 (via cytoplasmic region); initiating the ILK-PARVB cascade to induce cytoskeleton rearrangement and directional migration of cells. Interacts with IQGAP1; the interaction is required for localization of IQGAP1 to the cell cortex. Phosphorylation by PAK1 modulates ILK subcellular location by promoting its nuclear export. In terms of tissue distribution, highly expressed in lung, heart, kidney, liver, brain, spleen and skeletal muscle. Weakly expressed in testis.

It localises to the cell junction. The protein resides in the focal adhesion. Its subcellular location is the cell membrane. The protein localises to the cytoplasm. It is found in the myofibril. It localises to the sarcomere. The protein resides in the cell projection. Its subcellular location is the lamellipodium. The protein localises to the nucleus. It is found in the cytoskeleton. It localises to the microtubule organizing center. The protein resides in the centrosome. Its subcellular location is the cell cortex. Its function is as follows. Scaffold protein which mediates protein-protein interactions during a range of cellular events including focal adhesion assembly, cell adhesion and cell migration. Regulates integrin-mediated signal transduction by contributing to inside-out integrin activation. Recruits PARVA and LIMS1/PITCH to form the heterotrimeric IPP (ILK-PINCH-PARVIN) complex which binds to F-actin via the C-terminal tail of LIMS1 and the N-terminal region of PARVA, promoting F-actin filament bundling, a process required to generate force for actin cytoskeleton reorganization and subsequent dynamic cell adhesion events such as cell spreading and migration. Binding to PARVA promotes effective assembly of ILK into focal adhesions while PARVA-bound ILK can simultaneously engage integrin-beta cytoplasmic tails to mediate cell adhesion. Plays a role with PARVG in promoting the cell adhesion and spreading of leukocytes. Acts as an upstream effector of both AKT1/PKB and GSK3. Mediates trafficking of caveolae to the cell surface in an ITGB1-dependent manner by promoting the recruitment of IQGAP1 to the cell cortex which cooperates with its effector DIAPH1 to locally stabilize microtubules and allow stable insertion of caveolae into the plasma membrane. Required for the maintenance of mitotic spindle integrity by promoting phosphorylation of TACC3 by AURKA. Associates with chromatin and may act as a negative regulator of transcription when located in the nucleus. In Mus musculus (Mouse), this protein is Scaffold protein ILK.